A 193-amino-acid chain; its full sequence is dCTP deaminase (193 aa).

Residues 110 to 115 (RSSLAR), Asp-128, 136 to 138 (VLE), Tyr-171, Lys-178, and Gln-182 each bind dCTP. Glu-138 serves as the catalytic Proton donor/acceptor.

Belongs to the dCTP deaminase family. Homotrimer.

It catalyses the reaction dCTP + H2O + H(+) = dUTP + NH4(+). The protein operates within pyrimidine metabolism; dUMP biosynthesis; dUMP from dCTP (dUTP route): step 1/2. In terms of biological role, catalyzes the deamination of dCTP to dUTP. The protein is dCTP deaminase of Aeromonas hydrophila subsp. hydrophila (strain ATCC 7966 / DSM 30187 / BCRC 13018 / CCUG 14551 / JCM 1027 / KCTC 2358 / NCIMB 9240 / NCTC 8049).